Reading from the N-terminus, the 332-residue chain is MRHATLYRYQLPMDSGVILRNEKLTQREGFIVELTENGRTARGEIAPLPGFSRETLEDAGLQAQALLEQWVKGHAIEWDAQHPSVAFGLSMAHYELEQALPEQGNYYVAPLCTGDPDELLPVLNNLPGQKVAKVKVGLYEPIRDGMLVNLFLESMPDLTLRLDANRAWTPAKALKFAQYVAPSLRSRIAFLEEPCQSPSESIAFSIDTGIAIAWDETLQEAVRDADFALENLLGVKTIVIKPTLIGSVYRVEALIEKAKTLGLQAVISSSLESSLGLNQLARLAHKLLPNEVPGLDTIGLFRAQLETPWPNSSLPVVALQEQSIVWRSESSL.

The active-site Proton donor is lysine 135. Mg(2+) contacts are provided by aspartate 163, glutamate 192, and aspartate 215. Lysine 241 acts as the Proton acceptor in catalysis.

This sequence belongs to the mandelate racemase/muconate lactonizing enzyme family. MenC type 1 subfamily. It depends on a divalent metal cation as a cofactor.

The catalysed reaction is (1R,6R)-6-hydroxy-2-succinyl-cyclohexa-2,4-diene-1-carboxylate = 2-succinylbenzoate + H2O. It participates in quinol/quinone metabolism; 1,4-dihydroxy-2-naphthoate biosynthesis; 1,4-dihydroxy-2-naphthoate from chorismate: step 4/7. Its pathway is quinol/quinone metabolism; menaquinone biosynthesis. In terms of biological role, converts 2-succinyl-6-hydroxy-2,4-cyclohexadiene-1-carboxylate (SHCHC) to 2-succinylbenzoate (OSB). The polypeptide is o-succinylbenzoate synthase (Vibrio cholerae serotype O1 (strain ATCC 39315 / El Tor Inaba N16961)).